The sequence spans 348 residues: Aspartate carbamoyltransferase catalytic subunit (348 aa).

Positions 59 and 60 each coordinate carbamoyl phosphate. Residue Lys-87 coordinates L-aspartate. Carbamoyl phosphate is bound by residues Arg-109, His-142, and Gln-145. 2 residues coordinate L-aspartate: Arg-182 and Arg-253. Gly-294 and Pro-295 together coordinate carbamoyl phosphate.

It belongs to the aspartate/ornithine carbamoyltransferase superfamily. ATCase family. As to quaternary structure, heterododecamer (2C3:3R2) of six catalytic PyrB chains organized as two trimers (C3), and six regulatory PyrI chains organized as three dimers (R2).

The enzyme catalyses carbamoyl phosphate + L-aspartate = N-carbamoyl-L-aspartate + phosphate + H(+). The protein operates within pyrimidine metabolism; UMP biosynthesis via de novo pathway; (S)-dihydroorotate from bicarbonate: step 2/3. In terms of biological role, catalyzes the condensation of carbamoyl phosphate and aspartate to form carbamoyl aspartate and inorganic phosphate, the committed step in the de novo pyrimidine nucleotide biosynthesis pathway. The protein is Aspartate carbamoyltransferase catalytic subunit of Prochlorococcus marinus (strain MIT 9313).